The sequence spans 232 residues: Large ribosomal subunit protein uL1 (232 aa).

This sequence belongs to the universal ribosomal protein uL1 family. Part of the 50S ribosomal subunit.

In terms of biological role, binds directly to 23S rRNA. The L1 stalk is quite mobile in the ribosome, and is involved in E site tRNA release. Its function is as follows. Protein L1 is also a translational repressor protein, it controls the translation of the L11 operon by binding to its mRNA. The chain is Large ribosomal subunit protein uL1 from Thermosipho africanus (strain TCF52B).